Consider the following 171-residue polypeptide: Putative defense protein (171 aa).

A signal peptide spans 1 to 23 (MKVYACLCAAVVMLVMTSRVSEA). The Reelin domain maps to 24-171 (RSTGAPLSAC…VQSAPIKIVS (148 aa)). A disulfide bridge links Cys-33 with Cys-110. A glycan (N-linked (GlcNAc...) asparagine) is linked at Asn-41.

This sequence belongs to the insect defense protein family.

Its subcellular location is the secreted. Its function is as follows. May have antimicrobial activity. The polypeptide is Putative defense protein (Bombyx mori (Silk moth)).